The sequence spans 469 residues: Probable ribonuclease FAU-1 (469 aa).

The protein belongs to the FAU-1 family.

In terms of biological role, probable RNase involved in rRNA stability through maturation and/or degradation of precursor rRNAs. Binds to RNA in loop regions with AU-rich sequences. This is Probable ribonuclease FAU-1 from Ignicoccus hospitalis (strain KIN4/I / DSM 18386 / JCM 14125).